The primary structure comprises 167 residues: MINVEIIKNYDKWREHKQINKSLIQKITQNILLRFNNFSKIKQFELSMLLTNTAEILTLNKQFRNIEKATNVLAFPSNELNWQDLYSKLEFLGDSDYMHLGDVAFCYEVIYNESCEQQKTFENHFIHLLIHSILHLIGFDHQNDTEAHIMENLEIEILSYFGISSPY.

Residues H131, H135, and H141 each coordinate Zn(2+).

It belongs to the endoribonuclease YbeY family. The cofactor is Zn(2+).

Its subcellular location is the cytoplasm. Its function is as follows. Single strand-specific metallo-endoribonuclease involved in late-stage 70S ribosome quality control and in maturation of the 3' terminus of the 16S rRNA. The protein is Endoribonuclease YbeY of Rickettsia akari (strain Hartford).